We begin with the raw amino-acid sequence, 714 residues long: Fatty acid oxidation complex subunit alpha (714 aa).

The segment at 1–190 (MDTVSAFKLE…KAGLVDEVVP (190 aa)) is enoyl-CoA hydratase. Residues 306-714 (GSLRSVAVLG…TFWPADERLT (409 aa)) are 3-hydroxyacyl-CoA dehydrogenase.

The protein in the N-terminal section; belongs to the enoyl-CoA hydratase/isomerase family. It in the central section; belongs to the 3-hydroxyacyl-CoA dehydrogenase family. In terms of assembly, heterotetramer of two alpha chains (FadJ) and two beta chains (FadI).

The protein resides in the cytoplasm. It carries out the reaction a (3S)-3-hydroxyacyl-CoA = a (2E)-enoyl-CoA + H2O. The catalysed reaction is a 4-saturated-(3S)-3-hydroxyacyl-CoA = a (3E)-enoyl-CoA + H2O. The enzyme catalyses a (3S)-3-hydroxyacyl-CoA + NAD(+) = a 3-oxoacyl-CoA + NADH + H(+). It catalyses the reaction (3S)-3-hydroxybutanoyl-CoA = (3R)-3-hydroxybutanoyl-CoA. It participates in lipid metabolism; fatty acid beta-oxidation. Functionally, catalyzes the formation of a hydroxyacyl-CoA by addition of water on enoyl-CoA. Also exhibits 3-hydroxyacyl-CoA epimerase and 3-hydroxyacyl-CoA dehydrogenase activities. The protein is Fatty acid oxidation complex subunit alpha of Klebsiella pneumoniae subsp. pneumoniae (strain ATCC 700721 / MGH 78578).